The chain runs to 168 residues: Mitochondrial inner membrane protein Mpv17 (168 aa).

4 helical membrane passes run Ile-12–Phe-29, Arg-41–Tyr-61, Met-82–Val-101, and Leu-144–Leu-166.

Belongs to the peroxisomal membrane protein PXMP2/4 family. As to quaternary structure, part of a larger complex that may be a homohexamer.

Its subcellular location is the mitochondrion inner membrane. Non-selective channel that modulates the membrane potential under normal conditions and oxidative stress, and is involved in mitochondrial homeostasis. Can translocate uridine, but not orotate, across a lipid membrane. Involved in maintenance of mitochondrial ultrastructure. May be involved in mitochondrial DNA (mtDNA) maintenance but does not appear to be directly involved in mitochondrial deoxynucleoside triphosphate (dNTP) pool homeostasis. May be involved in the regulation of reactive oxygen species metabolism and the control of oxidative phosphorylation. This chain is Mitochondrial inner membrane protein Mpv17, found in Drosophila melanogaster (Fruit fly).